Here is a 207-residue protein sequence, read N- to C-terminus: Small ribosomal subunit protein uS4 (207 aa).

Residues 26–53 (KPFDVKTKKHAKAPGQHGQARGKQSEYS) are disordered. The S4 RNA-binding domain maps to 97–159 (SRLDNVVYRM…AKQQLRIKNA (63 aa)).

The protein belongs to the universal ribosomal protein uS4 family. As to quaternary structure, part of the 30S ribosomal subunit. Contacts protein S5. The interaction surface between S4 and S5 is involved in control of translational fidelity.

Functionally, one of the primary rRNA binding proteins, it binds directly to 16S rRNA where it nucleates assembly of the body of the 30S subunit. With S5 and S12 plays an important role in translational accuracy. The protein is Small ribosomal subunit protein uS4 of Acinetobacter baylyi (strain ATCC 33305 / BD413 / ADP1).